A 1134-amino-acid chain; its full sequence is Early transcription factor large subunit homolog (1134 aa).

One can recognise a Helicase ATP-binding domain in the interval 52-352; it reads KGGRAFFPCD…PNGQPLQRQQ (301 aa). ATP is bound at residue 99-106; sequence WQTGTGKS. The short motif at 281 to 284 is the DEAH box element; it reads DEIH. Positions 524–725 constitute a Helicase C-terminal domain; the sequence is MMKDILSIIR…EGDKALRKHA (202 aa).

Belongs to the DEAD box helicase family. DEAH subfamily.

Its subcellular location is the virion. It catalyses the reaction ATP + H2O = ADP + phosphate + H(+). In terms of biological role, putative initation factor. This chain is Early transcription factor large subunit homolog, found in African swine fever virus (isolate Pig/Kenya/KEN-50/1950) (ASFV).